Consider the following 349-residue polypeptide: DNA repair protein XRCC3 (349 aa).

Residue methionine 1 is modified to N-acetylmethionine. Glycine 107–threonine 114 is an ATP binding site.

It belongs to the RecA family. RAD51 subfamily. As to quaternary structure, interacts with RAD51C and RAD51. Part of the CX3 complex consisting of RAD51C and XRCC3; the complex has a ring-like structure arranged into a flat disc around a central channel; CX3 can interact with RAD51 in vitro. Forms a complex with FANCD2, BRCA2 and phosphorylated FANCG. Interacts with SWSAP1 and ZSWIM7; involved in homologous recombination repair. Interacts directly with PALB2 which may serve as a scaffold for a HR complex containing PALB2, BRCA2, RAD51C, RAD51 and XRCC3.

The protein resides in the nucleus. It localises to the cytoplasm. The protein localises to the perinuclear region. It is found in the mitochondrion matrix. Its function is as follows. Involved in the homologous recombination repair (HRR) pathway of double-stranded DNA, thought to repair chromosomal fragmentation, translocations and deletions. Part of the RAD21 paralog protein complex CX3 which acts in the BRCA1-BRCA2-dependent HR pathway. Upon DNA damage, CX3 acts downstream of RAD51 recruitment; the complex binds predominantly to the intersection of the four duplex arms of the Holliday junction (HJ) and to junctions of replication forks. Involved in HJ resolution and thus in processing HR intermediates late in the DNA repair process; the function may be linked to the CX3 complex and seems to involve GEN1 during mitotic cell cycle progression. Part of a PALB2-scaffolded HR complex containing BRCA2 and RAD51C and which is thought to play a role in DNA repair by HR. Plays a role in regulating mitochondrial DNA copy number under conditions of oxidative stress in the presence of RAD51 and RAD51C. This Mus musculus (Mouse) protein is DNA repair protein XRCC3 (Xrcc3).